A 514-amino-acid chain; its full sequence is Na(+)/H(+) antiporter NhaB (514 aa).

Helical transmembrane passes span Leu-23–Ala-43, Pro-63–Ala-83, Leu-97–Phe-117, Leu-120–Phe-140, Phe-144–Ile-164, Leu-202–Pro-222, Phe-238–Val-258, Ala-303–Ile-323, Leu-357–Ile-377, Leu-391–Ile-411, Ala-447–Ile-467, and Val-475–Phe-495.

Belongs to the NhaB Na(+)/H(+) (TC 2.A.34) antiporter family.

It is found in the cell inner membrane. It catalyses the reaction 2 Na(+)(in) + 3 H(+)(out) = 2 Na(+)(out) + 3 H(+)(in). Functionally, na(+)/H(+) antiporter that extrudes sodium in exchange for external protons. The protein is Na(+)/H(+) antiporter NhaB of Citrobacter koseri (strain ATCC BAA-895 / CDC 4225-83 / SGSC4696).